The following is a 613-amino-acid chain: RUN domain-containing protein 1 (613 aa).

The disordered stretch occupies residues 15–36; sequence AAVGPKAKDEEEEEEEPLPPCE. Position 54 is a phosphothreonine (Thr54). The span at 57–69 shows a compositional bias: low complexity; the sequence is LEEATAEEPGAAP. Disordered regions lie at residues 57–79, 140–177, and 305–330; these read LEEA…PGRT, YEGP…RLET, and GKTG…KAED. Phosphoserine is present on residues Ser71 and Ser75. Basic and acidic residues predominate over residues 159-177; that stretch reads PWLRGEDQSEQEKQERLET. Positions 160–235 form a coiled coil; that stretch reads WLRGEDQSEQ…IKKLDMNLNE (76 aa). The span at 309 to 325 shows a compositional bias: polar residues; the sequence is NGCSRTGSSRTPPGNSK. Residues 421 to 602 form the RUN domain; sequence ELTMAVRKEL…LKFSLPVDLA (182 aa). The residue at position 497 (Ser497) is a Phosphoserine.

Functionally, may play a role as p53/TP53 inhibitor and thus may have oncogenic activity. The chain is RUN domain-containing protein 1 (RUNDC1) from Homo sapiens (Human).